A 150-amino-acid chain; its full sequence is Large ribosomal subunit protein bL9 (150 aa).

Belongs to the bacterial ribosomal protein bL9 family.

Its function is as follows. Binds to the 23S rRNA. This is Large ribosomal subunit protein bL9 from Delftia acidovorans (strain DSM 14801 / SPH-1).